Reading from the N-terminus, the 749-residue chain is Subtilisin-like protease SBT4.14 (749 aa).

Positions 1–28 (MIRSKCSCHHHLLVLVMVVLWISPRYAS) are cleaved as a signal peptide. The propeptide at 29–115 (AEDEHAKDFY…VSRNQYRKLH (87 aa)) is activation peptide. The Inhibitor I9 domain maps to 38-115 (YIIYLGDRPD…VSRNQYRKLH (78 aa)). The Peptidase S8 domain occupies 119–595 (SWDFVGLPLT…GGQINPRRAA (477 aa)). Aspartate 145 (charge relay system) is an active-site residue. N-linked (GlcNAc...) asparagine glycosylation occurs at asparagine 176. Histidine 210 serves as the catalytic Charge relay system. 4 N-linked (GlcNAc...) asparagine glycosylation sites follow: asparagine 225, asparagine 233, asparagine 446, and asparagine 458. Serine 536 acts as the Charge relay system in catalysis. Asparagine 618 is a glycosylation site (N-linked (GlcNAc...) asparagine).

The protein belongs to the peptidase S8 family. Post-translationally, the C-terminal propeptide is autocleaved. As to expression, expressed only in roots, particularly in xylem.

In Arabidopsis thaliana (Mouse-ear cress), this protein is Subtilisin-like protease SBT4.14.